The sequence spans 169 residues: Ribosome maturation factor RimM (169 aa).

Residues 97–169 (EDEVYFKDLI…KIVVDWEYDY (73 aa)) enclose the PRC barrel domain.

The protein belongs to the RimM family. In terms of assembly, binds ribosomal protein uS19.

The protein resides in the cytoplasm. Functionally, an accessory protein needed during the final step in the assembly of 30S ribosomal subunit, possibly for assembly of the head region. Essential for efficient processing of 16S rRNA. May be needed both before and after RbfA during the maturation of 16S rRNA. It has affinity for free ribosomal 30S subunits but not for 70S ribosomes. The protein is Ribosome maturation factor RimM of Francisella tularensis subsp. tularensis (strain WY96-3418).